The primary structure comprises 92 residues: PqqA binding protein (92 aa).

It belongs to the PqqD family. In terms of assembly, monomer. Interacts with PqqE.

It functions in the pathway cofactor biosynthesis; pyrroloquinoline quinone biosynthesis. Functions as a PqqA binding protein and presents PqqA to PqqE, in the pyrroloquinoline quinone (PQQ) biosynthetic pathway. In Pseudomonas paraeruginosa (strain DSM 24068 / PA7) (Pseudomonas aeruginosa (strain PA7)), this protein is PqqA binding protein.